We begin with the raw amino-acid sequence, 107 residues long: MSVSQVTDASFKQEVINNNLPVLVDFWAPWCGPCRMVSPVVDEIAEEYESSIKVVKINTDDNPTIAAEYGIRSIPTLMIFKAGERVDTVIGAVPKSTLASTLNKYIS.

The region spanning 2–107 (SVSQVTDASF…LASTLNKYIS (106 aa)) is the Thioredoxin domain. Residues cysteine 31 and cysteine 34 each act as nucleophile in the active site. A disulfide bridge links cysteine 31 with cysteine 34.

This sequence belongs to the thioredoxin family.

It is found in the plastid. The protein resides in the chloroplast. In terms of biological role, participates in various redox reactions through the reversible oxidation of its active center dithiol to a disulfide and catalyzes dithiol-disulfide exchange reactions. The protein is Thioredoxin (trxA) of Pyropia yezoensis (Susabi-nori).